Consider the following 151-residue polypeptide: SsrA-binding protein (151 aa).

The segment at 121-151 is disordered; sequence GKKLHDKRDTEKDREWQREKQRVMKNQRGAA. Over residues 126–142 the composition is skewed to basic and acidic residues; it reads DKRDTEKDREWQREKQR.

This sequence belongs to the SmpB family.

It localises to the cytoplasm. Required for rescue of stalled ribosomes mediated by trans-translation. Binds to transfer-messenger RNA (tmRNA), required for stable association of tmRNA with ribosomes. tmRNA and SmpB together mimic tRNA shape, replacing the anticodon stem-loop with SmpB. tmRNA is encoded by the ssrA gene; the 2 termini fold to resemble tRNA(Ala) and it encodes a 'tag peptide', a short internal open reading frame. During trans-translation Ala-aminoacylated tmRNA acts like a tRNA, entering the A-site of stalled ribosomes, displacing the stalled mRNA. The ribosome then switches to translate the ORF on the tmRNA; the nascent peptide is terminated with the 'tag peptide' encoded by the tmRNA and targeted for degradation. The ribosome is freed to recommence translation, which seems to be the essential function of trans-translation. This is SsrA-binding protein from Chromobacterium violaceum (strain ATCC 12472 / DSM 30191 / JCM 1249 / CCUG 213 / NBRC 12614 / NCIMB 9131 / NCTC 9757 / MK).